Reading from the N-terminus, the 573-residue chain is Probable D-xylulose kinase A (573 aa).

4 residues coordinate substrate: H97, R168, D284, and N285. Residues W366, 471–472 (GG), and N475 each bind ATP.

It belongs to the FGGY kinase family.

The protein localises to the cytoplasm. It catalyses the reaction D-xylulose + ATP = D-xylulose 5-phosphate + ADP + H(+). In terms of biological role, highly specific D-xylulose kinase which participates in the catabolism of xylose. Xylose is a major component of hemicelluloses such as xylan. Most fungi utilize D-xylose via three enzymatic reactions, xylose reductase (XR), xylitol dehydrogenase (XDH), and xylulokinase, to form xylulose 5-phosphate, which enters pentose phosphate pathway. In Aspergillus fumigatus (strain ATCC MYA-4609 / CBS 101355 / FGSC A1100 / Af293) (Neosartorya fumigata), this protein is Probable D-xylulose kinase A (xkiA).